Consider the following 423-residue polypeptide: Glutamate-1-semialdehyde 2,1-aminomutase (423 aa).

Lys266 carries the post-translational modification N6-(pyridoxal phosphate)lysine.

It belongs to the class-III pyridoxal-phosphate-dependent aminotransferase family. HemL subfamily. As to quaternary structure, homodimer. The cofactor is pyridoxal 5'-phosphate.

It localises to the cytoplasm. It carries out the reaction (S)-4-amino-5-oxopentanoate = 5-aminolevulinate. Its pathway is porphyrin-containing compound metabolism; protoporphyrin-IX biosynthesis; 5-aminolevulinate from L-glutamyl-tRNA(Glu): step 2/2. This Nitratidesulfovibrio vulgaris (strain ATCC 29579 / DSM 644 / CCUG 34227 / NCIMB 8303 / VKM B-1760 / Hildenborough) (Desulfovibrio vulgaris) protein is Glutamate-1-semialdehyde 2,1-aminomutase.